The chain runs to 118 residues: Large ribosomal subunit protein bL19 (118 aa).

It belongs to the bacterial ribosomal protein bL19 family.

In terms of biological role, this protein is located at the 30S-50S ribosomal subunit interface and may play a role in the structure and function of the aminoacyl-tRNA binding site. The protein is Large ribosomal subunit protein bL19 of Campylobacter jejuni subsp. doylei (strain ATCC BAA-1458 / RM4099 / 269.97).